Consider the following 320-residue polypeptide: MLYKRNPQLNKNGELIHLLSTEGLSKDILTHILDTAANFVSVNDREVKKVPLLRGKSVFNLFFENSTRTRTTFEIAAKRLSADVFNLDIARSSASKGESLLDTIANLSAMAADIFVVRHSESGAPYLIAQHVAPHVHVVNAGDGRHAHPTQGLLDMYTIRHYKKDFANLRVAIVGDVLHSRVARSDIHALTTLGAAEVRVVGPRTLVPPDLAQMGVRVFHTLEEGIRDCDVIIMLRLQNERMSGALLPSSQEYFKSFGLTAEKLRLAKPDAIVMHPGPINRGVEIDSEVVDGPQAVILSQVSFGIAVRMAVMSIVAGNEA.

2 residues coordinate carbamoyl phosphate: Arg68 and Thr69. Lys96 is a binding site for L-aspartate. Residues Arg118, His148, and Gln151 each contribute to the carbamoyl phosphate site. Residues Arg181 and Arg236 each contribute to the L-aspartate site. Carbamoyl phosphate-binding residues include Gly277 and Pro278.

This sequence belongs to the aspartate/ornithine carbamoyltransferase superfamily. ATCase family. Heterododecamer (2C3:3R2) of six catalytic PyrB chains organized as two trimers (C3), and six regulatory PyrI chains organized as three dimers (R2).

The catalysed reaction is carbamoyl phosphate + L-aspartate = N-carbamoyl-L-aspartate + phosphate + H(+). It functions in the pathway pyrimidine metabolism; UMP biosynthesis via de novo pathway; (S)-dihydroorotate from bicarbonate: step 2/3. Functionally, catalyzes the condensation of carbamoyl phosphate and aspartate to form carbamoyl aspartate and inorganic phosphate, the committed step in the de novo pyrimidine nucleotide biosynthesis pathway. The polypeptide is Aspartate carbamoyltransferase catalytic subunit (Delftia acidovorans (strain DSM 14801 / SPH-1)).